An 86-amino-acid chain; its full sequence is Protein Vpu (86 aa).

Topologically, residues 1–8 are extracellular; the sequence is MDIVQQVG. The chain crosses the membrane as a helical span at residues 9–29; the sequence is LLVVLIIELVIVIVIWVKVYK. At 30-86 the chain is on the cytoplasmic side; the sequence is LCKEDRRQKKIDRLIARIRERAEDSGNESDGDTEELQDLITEGDNLMHIGIRDNRNN. 2 positions are modified to phosphoserine; by host CK2: Ser-54 and Ser-58.

It belongs to the HIV-1 VPU protein family. As to quaternary structure, homopentamer. Interacts with host CD4 and BRTC; these interactions induce proteasomal degradation of CD4. Interacts with host BST2; this interaction leads to the degradation of host BST2. Interacts with host FBXW11. Interacts with host AP1M1; this interaction plays a role in the mistrafficking and subsequent degradation of host BST2. Interacts with host RANBP2; this interaction allows Vpu to down-regulate host BLM sumoylation. Forms pentamers or hexamers. Interacts with host CD4 and BRTC; these interactions induce proteasomal degradation of CD4. Interacts with host BST2; this interaction leads to the degradation of host BST2. Interacts with host FBXW11. Interacts with host AP1M1; this interaction plays a role in the mistrafficking and subsequent degradation of host BST2. In terms of processing, phosphorylated by host CK2. This phosphorylation is necessary for interaction with human BTRC and degradation of CD4.

It localises to the host membrane. With respect to regulation, ion channel activity is inhibited by hexamethylene amiloride in vitro. Enhances virion budding by targeting host CD4 and Tetherin/BST2 to proteasome degradation. Degradation of CD4 prevents any unwanted premature interactions between viral Env and its host receptor CD4 in the endoplasmic reticulum. Degradation of antiretroviral protein Tetherin/BST2 is important for virion budding, as BST2 tethers new viral particles to the host cell membrane. Mechanistically, Vpu bridges either CD4 or BST2 to BTRC, a substrate recognition subunit of the Skp1/Cullin/F-box protein E3 ubiquitin ligase, induces their ubiquitination and subsequent proteasomal degradation. The alteration of the E3 ligase specificity by Vpu seems to promote the degradation of host IKBKB, leading to NF-kappa-B down-regulation and subsequent apoptosis. Acts as a viroporin that forms an oligomeric ion channel in membranes. Modulates the host DNA repair mechanisms to promote degradation of nuclear viral cDNA in cells that are already productively infected in order to suppress immune sensing and proviral hyper-integration (superinfection). Manipulates PML-NBs and modulates SUMOylation of host BLM protein thereby enhancing its DNA-end processing activity toward viral unintegrated linear DNA. Also inhibits RAD52-mediated homologous repair of viral cDNA, preventing the generation of dead-end circular forms of single copies of the long terminal repeat and permitting sustained nucleolytic attack. This Pan troglodytes (Chimpanzee) protein is Protein Vpu.